Consider the following 196-residue polypeptide: Mitochondrial inner membrane protein SHH3 (196 aa).

The transit peptide at 1 to 53 (MKATIQRVTSVFGVPRASVFVPRISTPFILHNYISNGRMDLFSKEFHNGRVSK) directs the protein to the mitochondrion. At 54-97 (SDLWSSNKEEELLVSQRKKRPISPHLTVYEPEMSWYLSSLHRIS) the chain is on the mitochondrial matrix side. Positions 91 and 95 each coordinate a ubiquinone. The chain crosses the membrane as a helical span at residues 98-118 (GVLLALGFYAFTITLGVTTIM). The Mitochondrial intermembrane segment spans residues 119–137 (GMDTTFQDLNKWYHEKMPK). A helical membrane pass occupies residues 138–160 (WSQWVAKGSAAYLFAFHFGNGIR). Histidine 154 is a binding site for heme. The Mitochondrial matrix portion of the chain corresponds to 161 to 174 (HLIWDMGYELTNRG). A helical transmembrane segment spans residues 175-195 (VIKTGSIVLAGTLVLGTYLLA). Glutamine 196 is a topological domain (mitochondrial intermembrane).

This sequence belongs to the cytochrome b560 family.

Its subcellular location is the mitochondrion inner membrane. Functionally, homolog of SDH3, but seems not to be a stoichiometric subunit of either the succinate dehydrogenase (SDH) complex or the mitochondrial inner membrane translocase TIM22 complex. The sequence is that of Mitochondrial inner membrane protein SHH3 from Saccharomyces cerevisiae (strain ATCC 204508 / S288c) (Baker's yeast).